An 83-amino-acid polypeptide reads, in one-letter code: UPF0297 protein LCK_00468 (83 aa).

It belongs to the UPF0297 family.

The protein is UPF0297 protein LCK_00468 of Leuconostoc citreum (strain KM20).